Reading from the N-terminus, the 491-residue chain is UDP-N-acetylmuramate--L-alanine ligase (491 aa).

126–132 (GTHGKTT) provides a ligand contact to ATP.

The protein belongs to the MurCDEF family.

The protein resides in the cytoplasm. The catalysed reaction is UDP-N-acetyl-alpha-D-muramate + L-alanine + ATP = UDP-N-acetyl-alpha-D-muramoyl-L-alanine + ADP + phosphate + H(+). Its pathway is cell wall biogenesis; peptidoglycan biosynthesis. Cell wall formation. This is UDP-N-acetylmuramate--L-alanine ligase from Salmonella arizonae (strain ATCC BAA-731 / CDC346-86 / RSK2980).